The chain runs to 442 residues: MQKEVNIIGAGLAGCEAAYLLANNGVKVNLFEVKSLMKNDIQKTNDLGELVCSNTLRSKSKKNAAGILKNEMKLLNSLVIKAALENEIPGDDALSVDRFGFSKYITDKIKNHKNINLIEQEVSEVDYTKVTIIASGPLTTDKLGKNIELMTGNEKLFFLDASAPIITKDSIDFNKVYWASRHNDGKDGQYICIPLNEEQFNAFVEELKNAETIKLKSFEKEIYFKGCQPIEQIAKTSKKVLLNGPLSPNNLIDENGNTPFAVVQLRQDDAIDSLYNFVGFQTNIKWPEQKRILQTLPGLENLNIVRFGVMHKNYYINSPKLLNRSLQVKRNKNIFFAGQITGVEGYIESASSGILTAINVLAYLNNIKIEQPSRKSMLGALNFYITNPKHDKLKPMKCNLGILDQQNKNAKSEFYSFDESEREIRRFIKGINNFAKIGENNE.

Residue 9–14 (GAGLAG) participates in FAD binding.

It belongs to the MnmG family. TrmFO subfamily. The cofactor is FAD.

The protein resides in the cytoplasm. It carries out the reaction uridine(54) in tRNA + (6R)-5,10-methylene-5,6,7,8-tetrahydrofolate + NADH + H(+) = 5-methyluridine(54) in tRNA + (6S)-5,6,7,8-tetrahydrofolate + NAD(+). It catalyses the reaction uridine(54) in tRNA + (6R)-5,10-methylene-5,6,7,8-tetrahydrofolate + NADPH + H(+) = 5-methyluridine(54) in tRNA + (6S)-5,6,7,8-tetrahydrofolate + NADP(+). Functionally, catalyzes the folate-dependent formation of 5-methyl-uridine at position 54 (M-5-U54) in all tRNAs. The polypeptide is Methylenetetrahydrofolate--tRNA-(uracil-5-)-methyltransferase TrmFO 1 (Mesoplasma florum (strain ATCC 33453 / NBRC 100688 / NCTC 11704 / L1) (Acholeplasma florum)).